A 470-amino-acid polypeptide reads, in one-letter code: FLYWCH transcription factor 2 (470 aa).

Positions 102–148 are disordered; sequence SQLISEDTRPSASSSPSSTATAVSNSGQSNATSTSSSSTEPEYKPRN. Residues 111 to 140 are compositionally biased toward low complexity; sequence PSASSSPSSTATAVSNSGQSNATSTSSSST. Residues 145-204 form an FLYWCH-type zinc finger; the sequence is KPRNVREKVYADGYIMSFDKKSCCGTKEFWRCERKNDCNARMHSDINTREIVRKLHPHNH.

Probable transcription factor. May bind to the promoters of target genes, including micro-RNA genes, in order to repress expression, and acting redundantly with flh-1 and flh-3. This is FLYWCH transcription factor 2 from Caenorhabditis elegans.